A 412-amino-acid chain; its full sequence is Transcription factor IIIA (412 aa).

Residues tyrosine 20–histidine 43 form a C2H2-type 1; degenerate zinc finger. C2H2-type zinc fingers lie at residues histidine 66–histidine 88, phenylalanine 94–histidine 118, and phenylalanine 123–histidine 148. Positions valine 144–glutamate 207 are disordered. Residues histidine 148 to glutamate 188 are compositionally biased toward basic and acidic residues. Lysine 185 participates in a covalent cross-link: Glycyl lysine isopeptide (Lys-Gly) (interchain with G-Cter in ubiquitin). The C2H2-type 5 zinc-finger motif lies at valine 215–histidine 239. The C2H2-type 6; degenerate zinc finger occupies alanine 247–histidine 272. The C2H2-type 7; degenerate zinc-finger motif lies at isoleucine 275 to histidine 296. The C2H2-type 8 zinc-finger motif lies at isoleucine 305–histidine 330. Residues phenylalanine 336–histidine 362 form a C2H2-type 9; degenerate zinc finger. Residues leucine 384 to alanine 391 carry the Nuclear localization signal motif.

Protein product TFIIIA (44 kDa) is proteolytically cleaved into TFIIIA-C (34 kDa). Expressed in seedlings, flowers, siliques and seeds.

It localises to the nucleus. The protein resides in the nucleolus. Essential protein. Isoform 1 is a transcription activator the binds both 5S rDNA and 5S rRNA and stimulates the transcription of 5S rRNA gene. Isoform 1 regulates 5S rRNA levels during development. The sequence is that of Transcription factor IIIA from Arabidopsis thaliana (Mouse-ear cress).